Reading from the N-terminus, the 150-residue chain is Putative pre-16S rRNA nuclease (150 aa).

It belongs to the YqgF nuclease family.

It localises to the cytoplasm. Could be a nuclease involved in processing of the 5'-end of pre-16S rRNA. The protein is Putative pre-16S rRNA nuclease of Protochlamydia amoebophila (strain UWE25).